The primary structure comprises 406 residues: 2,3-bisphosphoglycerate-independent phosphoglycerate mutase (406 aa).

The protein belongs to the BPG-independent phosphoglycerate mutase family. A-PGAM subfamily.

It catalyses the reaction (2R)-2-phosphoglycerate = (2R)-3-phosphoglycerate. It participates in carbohydrate degradation; glycolysis; pyruvate from D-glyceraldehyde 3-phosphate: step 3/5. In terms of biological role, catalyzes the interconversion of 2-phosphoglycerate and 3-phosphoglycerate. The sequence is that of 2,3-bisphosphoglycerate-independent phosphoglycerate mutase from Methanococcus maripaludis (strain C6 / ATCC BAA-1332).